The sequence spans 579 residues: Folliculin (579 aa).

Residues 32–52 (GASCGDSIGQGEQAEDEEMGI) are disordered. The uDENN FLCN/SMCR8-type domain occupies 86-242 (RSLAAGHPGY…RNGNAARSLT (157 aa)). The region spanning 337–491 (NMVQRRMGVF…ILNKIEAALS (155 aa)) is the cDENN FLCN/SMCR8-type domain. Residues 493–558 (ENLSMDVVDQ…LLKFWMTGLS (66 aa)) enclose the dDENN FLCN/SMCR8-type domain.

It belongs to the folliculin family. As to quaternary structure, component of the lysosomal folliculin complex (LFC).

The protein localises to the lysosome membrane. Its subcellular location is the cytoplasm. It is found in the cytosol. The protein resides in the cell projection. It localises to the cilium. The protein localises to the cytoskeleton. Its subcellular location is the microtubule organizing center. It is found in the centrosome. The protein resides in the spindle. It localises to the nucleus. Its activity is regulated as follows. GTPase-activating activity is inhibited in the folliculin complex (LFC), which stabilizes the GDP-bound state of RagA/RRAGA (or RagB/RRAGB), because Arg-164 is located far from the RagC/RRAGC or RagD/RRAGD nucleotide pocket. Disassembly of the LFC complex upon amino acid restimulation liberates the GTPase-activating activity. Functionally, multi-functional protein, involved in both the cellular response to amino acid availability and in the regulation of glycolysis. GTPase-activating protein that plays a key role in the cellular response to amino acid availability through regulation of the non-canonical mTORC1 signaling cascade controlling the MiT/TFE factors tfeb and tfe3. Activates mTORC1 by acting as a GTPase-activating protein: specifically stimulates GTP hydrolysis by RagC/RRAGC or RagD/RRAGD, promoting the conversion to the GDP-bound state of RagC/RRAGC or RagD/RRAGD, and thereby activating the kinase activity of mTORC1. The GTPase-activating activity is inhibited during starvation and activated in presence of nutrients. Acts as a key component for non-canonical mTORC1-dependent control of the MiT/TFE factors tfeb and tfe3, while it is not involved in mTORC1-dependent phosphorylation of canonical RPS6KB1/S6K1 and EIF4EBP1/4E-BP1. In low-amino acid conditions, the lysosomal folliculin complex (LFC) is formed on the membrane of lysosomes, which inhibits the GTPase-activating activity of flcn, inactivates mTORC1 and maximizes nuclear translocation of tfeb and tfe3. Upon amino acid restimulation, RagA/RRAGA (or RagB/RRAGB) nucleotide exchange promotes disassembly of the LFC complex and liberates the GTPase-activating activity of flcn, leading to activation of mTORC1 and subsequent cytoplasmic retention of tfeb and tfe3. Required for the exit of hematopoietic stem cell from pluripotency by promoting mTOR-dependent cytoplasmic retention of tfe3, thereby increasing Wnt signaling. Acts as an inhibitor of browning of adipose tissue by regulating mTOR-dependent cytoplasmic retention of tfe3. In response to flow stress, regulates STK11/LKB1 accumulation and mTORC1 activation through primary cilia. Required for starvation-induced perinuclear clustering of lysosomes by promoting association of rilp with its effector rab34. Involved in the control of embryonic stem cells differentiation; together with lamtor1 it is necessary to recruit and activate RagC/RRAGC and RagD/RRAGD at the lysosomes, and to induce exit of embryonic stem cells from pluripotency via non-canonical, mTOR-independent tfe3 inactivation. Regulates glycolysis by binding to lactate dehydrogenase ldha, acting as an uncompetitive inhibitor. The protein is Folliculin of Xenopus tropicalis (Western clawed frog).